A 405-amino-acid chain; its full sequence is BRCA1-A complex subunit Abraxas 1 (405 aa).

Residues 7 to 153 (SALLSGFVFG…CSTYRLEHAL (147 aa)) form the MPN domain. The stretch at 208 to 262 (SLQEVHKINEMYATLQEELKKMCSDVEVSERSVEKLLTEVSQLKEEINRKKQHKI) forms a coiled coil. The disordered stretch occupies residues 365–405 (LHQDEEDCNQETKLALSSAETDEEALENPKDTNEYSYSPTF). The residue at position 402 (Ser-402) is a Phosphoserine. A pSXXF motif motif is present at residues 402 to 405 (SPTF).

The protein belongs to the FAM175 family. Abraxas subfamily. As to quaternary structure, component of the BRCA1-A complex. Component of the BRISC complex. Homodimer. Interacts directly (when phosphorylated at Ser-402) with BRCA1. The phosphorylated homodimer can interact directly with two BRCA1 chains, giving rise to a heterotetramer. Phosphorylation of Ser-402 of the pSXXF motif by ATM or ATR constitutes a specific recognition motif for the BRCT domain of BRCA1.

The protein resides in the nucleus. In terms of biological role, involved in DNA damage response and double-strand break (DSB) repair. Component of the BRCA1-A complex, acting as a central scaffold protein that assembles the various components of the complex and mediates the recruitment of BRCA1. The BRCA1-A complex specifically recognizes 'Lys-63'-linked ubiquitinated histones H2A and H2AX at DNA lesion sites, leading to target the BRCA1-BARD1 heterodimer to sites of DNA damage at DSBs. This complex also possesses deubiquitinase activity that specifically removes 'Lys-63'-linked ubiquitin on histones H2A and H2AX. The protein is BRCA1-A complex subunit Abraxas 1 of Gallus gallus (Chicken).